Consider the following 588-residue polypeptide: Adenine deaminase (588 aa).

Belongs to the metallo-dependent hydrolases superfamily. Adenine deaminase family. As to quaternary structure, homodimer. The cofactor is Mn(2+).

It catalyses the reaction adenine + H2O + H(+) = hypoxanthine + NH4(+). This is Adenine deaminase from Escherichia coli O7:K1 (strain IAI39 / ExPEC).